The chain runs to 295 residues: Protoheme IX farnesyltransferase (295 aa).

A run of 9 helical transmembrane segments spans residues 9–29 (ITKPGIIFGNVLSVAGGFFLA), 36–56 (FGVFLAAVIGTSLVVASGCVF), 80–100 (LVSLKLALLYATLLGIAGVGL), 108–128 (LAALFAVIGFVIYVGLYSLYL), 135–155 (GTLVGSLSGAMPPVIGYCAVS), 163–183 (LTLLVMFSLWQMPHSYAIAIF), 209–229 (IMLYILAFLVATLMLTVGGYA), 230–250 (GLNYLAVAAGMGMYWLYMAWK), and 265–285 (FVFSIFTITALSVMMSVDFQV).

The protein belongs to the UbiA prenyltransferase family. Protoheme IX farnesyltransferase subfamily.

The protein resides in the cell inner membrane. The catalysed reaction is heme b + (2E,6E)-farnesyl diphosphate + H2O = Fe(II)-heme o + diphosphate. It functions in the pathway porphyrin-containing compound metabolism; heme O biosynthesis; heme O from protoheme: step 1/1. In terms of biological role, converts heme B (protoheme IX) to heme O by substitution of the vinyl group on carbon 2 of heme B porphyrin ring with a hydroxyethyl farnesyl side group. The polypeptide is Protoheme IX farnesyltransferase (Pseudomonas syringae pv. syringae (strain B728a)).